We begin with the raw amino-acid sequence, 95 residues long: Co-chaperonin GroES (95 aa).

This sequence belongs to the GroES chaperonin family. Heptamer of 7 subunits arranged in a ring. Interacts with the chaperonin GroEL.

Its subcellular location is the cytoplasm. Together with the chaperonin GroEL, plays an essential role in assisting protein folding. The GroEL-GroES system forms a nano-cage that allows encapsulation of the non-native substrate proteins and provides a physical environment optimized to promote and accelerate protein folding. GroES binds to the apical surface of the GroEL ring, thereby capping the opening of the GroEL channel. In Jannaschia sp. (strain CCS1), this protein is Co-chaperonin GroES.